The primary structure comprises 593 residues: Probable 5'-nucleotidase (593 aa).

A signal peptide spans 1–21 (MKRFIPHRVIHAVCIGLALVG). Cysteine 22 is lipidated: N-palmitoyl cysteine. A lipid anchor (S-diacylglycerol cysteine) is attached at cysteine 22. A divalent metal cation-binding residues include aspartate 41, histidine 43, aspartate 91, asparagine 123, and histidine 224. Residues phenylalanine 456 and 539-545 (YIARGKD) contribute to the substrate site.

Belongs to the 5'-nucleotidase family. It depends on a divalent metal cation as a cofactor.

Its subcellular location is the cell membrane. The enzyme catalyses a ribonucleoside 5'-phosphate + H2O = a ribonucleoside + phosphate. This is Probable 5'-nucleotidase from Treponema pallidum (strain Nichols).